The sequence spans 356 residues: MNAARTGYRVFSANSTAACTELAKRITERLGAELGKSVVYQETNGETRVEIKESVRGQDIFIIQTIPRDVNTAVMELLIMAYALKTACARNIIGVIPYFPYSKQSKMRKRGSIVCKLLASMLAKAGLTHIITMDLHQKEIQGFFCFPVDNLRASPFLLQYIQEEIPNYRNAVIVAKSPDAAKRAQSYAERLRLGLAVIHGEAQCTELDMDDGRHSPPMVKNATVHPGLELPLMMAKEKPPITVVGDVGGRIAIIVDDIIDDVESFVAAAETLKERGAYKIYVMATHGILSAEAPRLIEESPIDEVVVTNTVPHELQKLQCPKIKTVDISLILSEAIRRIHNGESMAYLFRNITVDD.

At Met1 the chain carries N-acetylmethionine. 2 positions are modified to phosphoserine: Ser177 and Ser215.

This sequence belongs to the ribose-phosphate pyrophosphokinase family. As to quaternary structure, binds to PRPS1 and PRPS2. In terms of tissue distribution, ubiquitous.

Functionally, seems to play a negative regulatory role in 5-phosphoribose 1-diphosphate synthesis. The chain is Phosphoribosyl pyrophosphate synthase-associated protein 1 (Prpsap1) from Rattus norvegicus (Rat).